The following is a 109-amino-acid chain: V-type proton ATPase 16 kDa proteolipid subunit (109 aa).

A helical membrane pass occupies residues 1–20 (VPVVMAGVLGIYGLIIAVII). Over 21 to 39 (STGINPKAKPYYLFDGYAH) the chain is Lumenal. The chain crosses the membrane as a helical span at residues 40–61 (LSSGLACGLAGLAAGMAIGIVG). At 62–73 (DAGVRANAQQPK) the chain is on the cytoplasmic side. The chain crosses the membrane as a helical span at residues 74–99 (LFVGMILILIFAEALALYGLIVGIIL). Residues 100–109 (SSRAGQSRAD) are Lumenal-facing.

It belongs to the V-ATPase proteolipid subunit family. In terms of assembly, V-ATPase is a heteromultimeric enzyme composed of a peripheral catalytic V1 complex (main components: subunits A, B, C, D, E, and F) attached to an integral membrane V0 proton pore complex (main component: the proteolipid protein; which is present as a hexamer that forms the proton-conducting pore). In terms of tissue distribution, high expression in the mesocotyl tip of etiolated seedlings compared to the base.

It localises to the vacuole membrane. Functionally, proton-conducting pore forming subunit of the membrane integral V0 complex of vacuolar ATPase. V-ATPase is responsible for acidifying a variety of intracellular compartments in eukaryotic cells. The polypeptide is V-type proton ATPase 16 kDa proteolipid subunit (Zea mays (Maize)).